The chain runs to 174 residues: Inner membrane protein p22 (174 aa).

Over 1–7 (MLHIKMT) the chain is Intravirion. A helical membrane pass occupies residues 8-28 (ISTLLIALIVLLIIILVVFLY). Residues 29–174 (HKKQQPPKKV…LYLPRNHKYA (146 aa)) are Virion surface-facing.

Belongs to the asfivirus inner membrane protein p22 family.

The protein resides in the virion membrane. It localises to the host cell membrane. This chain is Inner membrane protein p22, found in African swine fever virus (isolate Pig/Kenya/KEN-50/1950) (ASFV).